The chain runs to 340 residues: Chorismate mutase 1, chloroplastic (340 aa).

The N-terminal 65 residues, 1 to 65 (MEASLLMRSS…KPRSGTSSVH (65 aa)), are a transit peptide targeting the chloroplast. Ala66 carries the N-acetylalanine modification. Residue Arg79 coordinates L-phenylalanine. Residues 79 to 340 (RVDESESLTL…QVEYLLRRLD (262 aa)) form the Chorismate mutase domain. Residues Arg150 and 211–214 (NYGS) each bind L-tyrosine. 211-214 (NYGS) serves as a coordination point for L-phenylalanine.

Homodimer. In terms of tissue distribution, expressed in roots, shoots, rosette leaves, stems, cauline leaves, flowers and siliques.

Its subcellular location is the plastid. The protein localises to the chloroplast. It catalyses the reaction chorismate = prephenate. It functions in the pathway metabolic intermediate biosynthesis; prephenate biosynthesis; prephenate from chorismate: step 1/1. With respect to regulation, allosterically inhibited by tyrosine and phenylalanine. Activated by tryptophan. Functionally, may play a role in chloroplast biogenesis. The chain is Chorismate mutase 1, chloroplastic from Arabidopsis thaliana (Mouse-ear cress).